Consider the following 440-residue polypeptide: MGRFNVDMIERVIVAPCLQSPKNILHLSPIDNKTRGLTNILSVYNASQRVSVSADPAKTIREALSKVLVYYPPFAGRLRNTENGDLEVECTGEGAVFVEAMADNDLSVLQDFNEYDPSFQQLVFNLREDVNIEDLHLLTVQVTRFTCGGFVVGTRFHHSVSDGKGIGQLLKGMGEMARGEFKPSLEPIWNREMVKPEDIMYLQFDHFDFIHPPLNLEKSIQASMVISFERINYIKRCMMEECKEFFSAFEVVVALIWLARTKSFRIPPNEYVKIIFPIDMRNSFDSPLPKGYYGNAIGNACAMDNVKDLLNGSLLYALMLIKKSKFALNENFKSRILTKPSTLDANMKHENVVGCGDWRNLGFYEADFGWGNAVNVSPMQQQREHELAMQNYFLFLRSAKNMIDGIKILMFMPASMVKPFKIEMEVTINKYVAKICNSKL.

Active-site proton acceptor residues include histidine 158 and aspartate 367.

Belongs to the plant acyltransferase family.

It carries out the reaction 10-deacetyl-2-debenzoylbaccatin III + benzoyl-CoA = 10-deacetylbaccatin III + CoA. It participates in alkaloid biosynthesis; taxol biosynthesis; baccatin III from 10-deacetyl-2-debenzoylbaccatin III: step 1/2. In terms of biological role, catalyzes the conversion of 2-debenzoyl-7,13-diacetylbaccatin III, a semisynthetic substrate, to 7,13-diacetylbaccatin III. This is 2-alpha-hydroxytaxane 2-O-benzoyltransferase from Taxus cuspidata (Japanese yew).